Here is a 122-residue protein sequence, read N- to C-terminus: Large ribosomal subunit protein uL14 (122 aa).

Belongs to the universal ribosomal protein uL14 family. As to quaternary structure, part of the 50S ribosomal subunit. Forms a cluster with proteins L3 and L19. In the 70S ribosome, L14 and L19 interact and together make contacts with the 16S rRNA in bridges B5 and B8.

Binds to 23S rRNA. Forms part of two intersubunit bridges in the 70S ribosome. In Brevibacillus brevis (strain 47 / JCM 6285 / NBRC 100599), this protein is Large ribosomal subunit protein uL14.